An 89-amino-acid chain; its full sequence is Probable Fe(2+)-trafficking protein (89 aa).

The protein belongs to the Fe(2+)-trafficking protein family.

Functionally, could be a mediator in iron transactions between iron acquisition and iron-requiring processes, such as synthesis and/or repair of Fe-S clusters in biosynthetic enzymes. The protein is Probable Fe(2+)-trafficking protein of Legionella pneumophila (strain Paris).